We begin with the raw amino-acid sequence, 109 residues long: MARDIGLNIPAPSEECDDAYCPFHGTLPVRGQILVGTVVSSKMDNTVVIERQYMKMVSKYQRYEKRRSKIHAHNPACISAKVGDIVTIVECRPISKTKSFVVVKAEVPK.

It belongs to the universal ribosomal protein uS17 family. As to quaternary structure, part of the 30S ribosomal subunit.

Its function is as follows. One of the primary rRNA binding proteins, it binds specifically to the 5'-end of 16S ribosomal RNA. The sequence is that of Small ribosomal subunit protein uS17 from Methanosarcina mazei (strain ATCC BAA-159 / DSM 3647 / Goe1 / Go1 / JCM 11833 / OCM 88) (Methanosarcina frisia).